The sequence spans 302 residues: Enolase-phosphatase E1 (302 aa).

Over residues 1–10 (MSDSRLRRRQ) the composition is skewed to basic residues. Positions 1–25 (MSDSRLRRRQGTAGTDNKRRADGPH) are disordered. Residues 16–25 (DNKRRADGPH) are compositionally biased toward basic and acidic residues. 2 residues coordinate Mg(2+): Asp-40 and Glu-42. Substrate-binding positions include 183 to 184 (SS) and Lys-217. Asp-242 serves as a coordination point for Mg(2+).

This sequence belongs to the HAD-like hydrolase superfamily. MasA/MtnC family. As to quaternary structure, monomer. Mg(2+) serves as cofactor.

The protein localises to the cytoplasm. The protein resides in the nucleus. It carries out the reaction 5-methylsulfanyl-2,3-dioxopentyl phosphate + H2O = 1,2-dihydroxy-5-(methylsulfanyl)pent-1-en-3-one + phosphate. The protein operates within amino-acid biosynthesis; L-methionine biosynthesis via salvage pathway; L-methionine from S-methyl-5-thio-alpha-D-ribose 1-phosphate: step 3/6. Its pathway is amino-acid biosynthesis; L-methionine biosynthesis via salvage pathway; L-methionine from S-methyl-5-thio-alpha-D-ribose 1-phosphate: step 4/6. Functionally, bifunctional enzyme that catalyzes the enolization of 2,3-diketo-5-methylthiopentyl-1-phosphate (DK-MTP-1-P) into the intermediate 2-hydroxy-3-keto-5-methylthiopentenyl-1-phosphate (HK-MTPenyl-1-P), which is then dephosphorylated to form the acireductone 1,2-dihydroxy-3-keto-5-methylthiopentene (DHK-MTPene). The chain is Enolase-phosphatase E1 from Branchiostoma floridae (Florida lancelet).